The following is a 546-amino-acid chain: Chaperonin GroEL 1 (546 aa).

Residues 29 to 32 (TLGP), 86 to 90 (DGTTT), G414, and D499 contribute to the ATP site.

This sequence belongs to the chaperonin (HSP60) family. As to quaternary structure, forms a cylinder of 14 subunits composed of two heptameric rings stacked back-to-back. Interacts with the co-chaperonin GroES.

Its subcellular location is the cytoplasm. The enzyme catalyses ATP + H2O + a folded polypeptide = ADP + phosphate + an unfolded polypeptide.. Its function is as follows. Together with its co-chaperonin GroES, plays an essential role in assisting protein folding. The GroEL-GroES system forms a nano-cage that allows encapsulation of the non-native substrate proteins and provides a physical environment optimized to promote and accelerate protein folding. The protein is Chaperonin GroEL 1 of Roseiflexus sp. (strain RS-1).